A 946-amino-acid polypeptide reads, in one-letter code: Serine/threonine-protein kinase PLK4 (946 aa).

The 254-residue stretch at 12–265 (FKVLNLLGKG…LSSVLDHAFM (254 aa)) folds into the Protein kinase domain. Residues 18 to 26 (LGKGSFACV) and Lys-41 contribute to the ATP site. Asp-136 acts as the Proton acceptor in catalysis. A disordered region spans residues 330–395 (HPAERSNGGS…TYGKPSSFSE (66 aa)). Residues 378-394 (RSGTSQSQTYGKPSSFS) show a composition bias toward polar residues. A Cryptic POLO box 1 (CPB1) domain is found at 566 to 679 (TLRSIISPLN…AKFIQLVRSK (114 aa)). Residues 680–792 (MPKVTYYTRY…GRRPAITESP (113 aa)) form the Cryptic POLO box 2 (CPB2) domain. Positions 789–828 (TESPRTQLTVDSARERKDEQSSANRVLHSSATSPPQIPNI) are disordered. Residues 809–828 (SSANRVLHSSATSPPQIPNI) are compositionally biased toward polar residues. The POLO box domain occupies 864-942 (QVLKSVFVEN…LSSILMLFAS (79 aa)).

This sequence belongs to the protein kinase superfamily. Ser/Thr protein kinase family. CDC5/Polo subfamily. As to quaternary structure, homodimer. Post-translationally, ubiquitinated; leading to its degradation by the proteasome.

The protein localises to the cytoplasm. It is found in the cytoskeleton. The protein resides in the microtubule organizing center. It localises to the centrosome. Its subcellular location is the centriole. The enzyme catalyses L-seryl-[protein] + ATP = O-phospho-L-seryl-[protein] + ADP + H(+). It catalyses the reaction L-threonyl-[protein] + ATP = O-phospho-L-threonyl-[protein] + ADP + H(+). Its function is as follows. Serine/threonine-protein kinase that plays a central role in centriole duplication. Able to trigger procentriole formation on the surface of the parental centriole cylinder, leading to the recruitment of centriole biogenesis proteins such as sass6, cpap, ccp110, cep135 and gamma-tubulin. When overexpressed, it is able to induce centrosome amplification through the simultaneous generation of multiple procentrioles adjoining each parental centriole during S phase. Its central role in centriole replication suggests a possible role in tumorigenesis, centrosome aberrations being frequently observed in tumors. Also involved in deuterosome-mediated centriole amplification in multiciliated that can generate more than 100 centrioles. The chain is Serine/threonine-protein kinase PLK4 from Xenopus tropicalis (Western clawed frog).